Reading from the N-terminus, the 815-residue chain is cGMP-specific 3',5'-cyclic phosphodiesterase delta (815 aa).

Topologically, residues 1-56 (MNEYNNDNMEQEKEKKKEEQKYKNIIKKEYFIFPRLYDKNKEIEYNKLRIHNIKEY) are cytoplasmic. Residues 57 to 77 (ICIHLTISLFIILIECFVFSF) traverse the membrane as a helical segment. Topologically, residues 78–86 (NLNIKDTTY) are extracellular. A helical transmembrane segment spans residues 87-107 (VEICVVIFSILNCLMHIVVLI). Over 108-120 (KMYFFTSESVYTK) the chain is Cytoplasmic. Residues 121–141 (GVFIGYIVLNQVFQFLSLYFF) form a helical membrane-spanning segment. Residues 142-160 (TKRNEQSKNDIAHLKYYDN) are Extracellular-facing. A helical transmembrane segment spans residues 161–181 (SFNLYVHFFVDSVFILCLPAL). Over 182–183 (SF) the chain is Cytoplasmic. The chain crosses the membrane as a helical span at residues 184–204 (FLSVLFMMMFLCLNILLINMI). The Extracellular segment spans residues 205–210 (KFNKTN). The N-linked (GlcNAc...) asparagine glycan is linked to asparagine 207. The chain crosses the membrane as a helical span at residues 211–231 (YGSDIYHICLLSVVLLMFLIL). Over 232–815 (RYMMEERNRL…FKEEIKHGKL (584 aa)) the chain is Cytoplasmic. The PDEase domain occupies 384–762 (YEVEVLKNIK…QTWRLIEKNI (379 aa)). The active-site Proton donor is histidine 459. 459-463 (HNANH) lines the 3',5'-cyclic GMP pocket. The a divalent metal cation site is built by histidine 463, histidine 499, aspartate 500, and aspartate 616. 3',5'-cyclic GMP-binding residues include aspartate 500, aspartate 616, and glutamine 715.

This sequence belongs to the cyclic nucleotide phosphodiesterase family. Requires a divalent metal cation as cofactor.

The protein localises to the membrane. It catalyses the reaction 3',5'-cyclic GMP + H2O = GMP + H(+). It functions in the pathway purine metabolism; 3',5'-cyclic GMP degradation; GMP from 3',5'-cyclic GMP: step 1/1. Its function is as follows. Specifically hydrolyzes the second messenger cGMP, which is a key regulator of many important physiological processes. Probably by regulating cGMP levels, required for activation of gametogenesis. The chain is cGMP-specific 3',5'-cyclic phosphodiesterase delta from Plasmodium falciparum (isolate 3D7).